The following is an 883-amino-acid chain: MVDTKTPGDKTLSMPTKTLTLKPRVEQGVVRQSFSHGRSKQVVVEKRGKRRVGGDGPAEPAAAAPEVVKKPTPAPPAVSPRQQPRPSPQQQARSGMVLRTLTEDERSARATALADARVREVEERRLAEIEAQRRAAQELVDKAEREAAEVRRKAEEERHRHEEETKRKAETEAKKRFGEAEPAKKPADGRPASTSTTTTAPRAPVTTTTRPPAVAAEAGDDDEAPRMVRRGPGGGPARPAPPPKQPAAKPGASKQRGRLTLVTALTADDVRERSIASFRRRTQRLKGHASNEPKEKLVREVIVPEAISIQELANRMSERAVDVIRMLMKQGAMHKINDVIDADTAQLIAEELGHTVKRVAASDVEEGLFDVVDNSTDTEPRSPVVTVMGHVDHGKTSLLDALRHANVVSGEAGGITQHIGAYQVTSPETGTKITFIDTPGHAAFTAMRARGAKVTDIVILVVAADDGVMPQTVEAINHAKAAGVPIIVAINKIDKPDAKPERVRTELLQYNVQVESLGGDVVDVEVSAKNKTNLDKLLEMIALQAELLDLKTNESRPAEGTVIEAKLDRGRGPVATVLVQRGTLKVGDIIVAGAEMGRVRALISDQGDNVDFAGPSVPVEVLGFNGPPEAGDRLAVVENEARARQVTSYRAHQKREKAASIVGMRGSLEQMMSQLKTTGRKDFPLIVKADVQGSLEAILGSLEKLGTDEVAARILHAGVGGISESDVTLAEGFSAVILGFSVRANKEAAAAAKRNGIEIRYYNIIYDLVDDVKKAMSGLLAPTLRETMLGNAQILEIFNISKVGKVAGCRVTDGTVERGANVRLIRDNVVVHEGKLSTLKRFKDEVKEVQSGQECGMAFENYTDMRAGDVIECYRVETIQRSL.

Disordered stretches follow at residues 1–96 (MVDT…RSGM) and 132–259 (QRRA…RGRL). The span at 57–66 (PAEPAAAAPE) shows a compositional bias: low complexity. Residues 72-87 (TPAPPAVSPRQQPRPS) are compositionally biased toward pro residues. Basic and acidic residues predominate over residues 132–188 (QRRAAQELVDKAEREAAEVRRKAEEERHRHEEETKRKAETEAKKRFGEAEPAKKPAD). A compositionally biased stretch (low complexity) spans 191 to 217 (PASTSTTTTAPRAPVTTTTRPPAVAAE). The region spanning 380–551 (PRSPVVTVMG…ALQAELLDLK (172 aa)) is the tr-type G domain. Positions 389–396 (GHVDHGKT) are G1. 389–396 (GHVDHGKT) is a GTP binding site. Residues 414–418 (GITQH) form a G2 region. A G3 region spans residues 437 to 440 (DTPG). GTP-binding positions include 437–441 (DTPGH) and 491–494 (NKID). The tract at residues 491–494 (NKID) is G4. The interval 527-529 (SAK) is G5.

This sequence belongs to the TRAFAC class translation factor GTPase superfamily. Classic translation factor GTPase family. IF-2 subfamily.

It localises to the cytoplasm. One of the essential components for the initiation of protein synthesis. Protects formylmethionyl-tRNA from spontaneous hydrolysis and promotes its binding to the 30S ribosomal subunits. Also involved in the hydrolysis of GTP during the formation of the 70S ribosomal complex. The chain is Translation initiation factor IF-2 from Rhodopseudomonas palustris (strain BisB5).